Consider the following 110-residue polypeptide: MDGTLFPGDDDLAIPATEFFSTKAAKKPEAKREAIVKADGDNNEETLKQRLTNLEKKITNVTTKFEQIEKCCKRNDDVLFRLENHAETLRAAMISLAKKIDVQTGRRPYE.

This sequence belongs to the orthopoxvirus OPG154 protein family. Homohexamers, covalently linked. Interacts with OPG144 and OPG153.

The protein resides in the virion. Its function is as follows. Structural protein involved in the envelopment of mature virion (MV) to form the wrapped virion (WV). The wrapping consists of the addition of Golgi membranes to the mature virion. Participates in mature virion (MV) movement within the infected cell. May play an indirect role in MV-cell fusion. The chain is Protein OPG154 (OPG154) from Homo sapiens (Human).